Reading from the N-terminus, the 83-residue chain is MKTLLLTMVVVTIVCLDLGYTLKCHNTQLPFIYKTCPEGKNLCFKATLKKFPLKFPVKRGCADNCPKNSALLKYVCCSTDKCN.

A signal peptide spans 1 to 21 (MKTLLLTMVVVTIVCLDLGYT). Intrachain disulfides connect Cys24/Cys43, Cys36/Cys61, Cys65/Cys76, and Cys77/Cys82.

This sequence belongs to the three-finger toxin family. Short-chain subfamily. Orphan group XV sub-subfamily. As to expression, expressed by the venom gland.

It localises to the secreted. It is found in the target cell membrane. Its function is as follows. Non-cytotoxic protein that does not show lytic and hemolytic activities, but can induce aggregation and fusion of sphingomyelin vesicles. It binds to integrin alpha-V/beta-3 (ITGAV/ITGB3) with high affinity, and it inhibits osteoclast differentiation and bone resorption in mice, probably due to binding to integrin alpha-V/beta-3. The chain is Cytotoxin A5 from Naja atra (Chinese cobra).